The chain runs to 470 residues: MATFMTEDFLLKNDIARTLYHKYAAPMPIYDFHCHLSPQEIADDRRFDNLGQIWLEGDHYKWRALRSAGVDESLITGKETSDYEKYMAWANTVPKTLGNPLYHWTHLELRRPFGITGTLFGPDTAESIWTQCNEKLATPAFSARGIMQQMNVRMVGTTDDPIDSLEYHRQIAADDSIDIEVAPSWRPDKVFKIELDGFVDYLGKLEAAADVSITRFDDLRQALTRRLDHFAACGCLASDHGIETLRFAPVPDDAQLDAILGKRLAGETLSELEIAQFTTAVLVWLGRQYAARGWVMQLHIGAIRNNNTRMFRLLGPDTGFDSIGDNNISWALSRLLDSMDVTNELPKTILYCLNPRDNEVLATMIGNFQGPGIAGKVQFGSGWWFNDQKDGMLRQLEQLSQMGLLSQFVGMLTDSRSFLSYTRHEYFRRILCNLLGQWAQDGEIPDDEAMLSRMVQDICFNNAQRYFTIK.

It belongs to the metallo-dependent hydrolases superfamily. Uronate isomerase family.

The enzyme catalyses D-glucuronate = D-fructuronate. It carries out the reaction aldehydo-D-galacturonate = keto-D-tagaturonate. Its pathway is carbohydrate metabolism; pentose and glucuronate interconversion. The chain is Uronate isomerase from Salmonella heidelberg (strain SL476).